We begin with the raw amino-acid sequence, 255 residues long: FMR1 neighbor protein (255 aa).

Residues 1–68 lie on the Cytoplasmic side of the membrane; it reads MSSHRRKAKG…ESLKMRVSKP (68 aa). Residues 69–89 traverse the membrane as a helical segment; sequence FGMLMLSIWILLFVCYYLSYY. Residues 90–183 are Extracellular-facing; the sequence is LCSGSSYFVL…FAPFRDVPKQ (94 aa). The P-type domain occupies 125–184; it reads LLNFFFPTTCNLRENQVAKPCNELQDLSESECLRHKCCFSSSGTTSFKCFAPFRDVPKQM. Residues 184–204 traverse the membrane as a helical segment; the sequence is MMQMFGLGAISLILVCLPIYC. Residues 205–255 are Cytoplasmic-facing; it reads RSLFWRSEPADDLQRQDNRVVTGLKKQRRKRKRKSEMLQKAARGREEHGDE. Positions 220-255 are disordered; the sequence is QDNRVVTGLKKQRRKRKRKSEMLQKAARGREEHGDE. Over residues 229-238 the composition is skewed to basic residues; the sequence is KKQRRKRKRK.

In terms of tissue distribution, testis-specific. Expressed in melanoma, sarcoma, lung, breast, bladder, esophageal and ovarian cancers.

The protein resides in the membrane. The sequence is that of FMR1 neighbor protein from Homo sapiens (Human).